The sequence spans 1272 residues: Myosin-binding protein C, cardiac-type (1272 aa).

The segment at lysine 95–phenylalanine 147 is disordered. Residues proline 102–leucine 117 are compositionally biased toward low complexity. The region spanning proline 137–serine 252 is the Ig-like C2-type 1 domain. At serine 265 the chain carries Phosphoserine; by PKA and PKC. Threonine 274 bears the Phosphothreonine; by PKA and PKC mark. Serine 300 is subject to Phosphoserine; by PKA. Ig-like C2-type domains lie at lysine 359–proline 451, proline 452–lysine 542, lysine 543–arginine 640, and proline 644–threonine 763. Fibronectin type-III domains lie at proline 772–proline 868 and glutamate 870–isoleucine 965. In terms of domain architecture, Ig-like C2-type 6 spans proline 969–threonine 1057. The region spanning proline 1066–threonine 1161 is the Fibronectin type-III 3 domain. Serine 1169 is modified (phosphoserine; by PKC). The Ig-like C2-type 7 domain occupies proline 1179–glutamate 1263.

Belongs to the immunoglobulin superfamily. MyBP family. Post-translationally, substrate for phosphorylation by PKA and PKC. Reversible phosphorylation appears to modulate contraction. As to expression, expressed specifically in cardiac muscle among adult tissues, but is also expressed transiently in the skeletal muscle at early developmental stages. Isoform Type I is found in embryonic skeletal muscle and isoform Type II is found in both embryonic skeletal and cardiac muscle.

In terms of biological role, thick filament-associated protein located in the crossbridge region of vertebrate striated muscle A bands. In vitro it binds MHC, F-actin and native thin filaments, and modifies the activity of actin-activated myosin ATPase. It may modulate muscle contraction or may play a more structural role. May be involved in the early phase of myofibrillogenesis. The chain is Myosin-binding protein C, cardiac-type (MYBPC3) from Gallus gallus (Chicken).